The following is a 198-amino-acid chain: Holliday junction branch migration complex subunit RuvA (198 aa).

The tract at residues Met-1 to Asp-64 is domain I. A domain II region spans residues Ser-65–Glu-143. A flexible linker region spans residues Ile-144–Asn-149. The segment at Glu-150–Gly-198 is domain III.

This sequence belongs to the RuvA family. In terms of assembly, homotetramer. Forms an RuvA(8)-RuvB(12)-Holliday junction (HJ) complex. HJ DNA is sandwiched between 2 RuvA tetramers; dsDNA enters through RuvA and exits via RuvB. An RuvB hexamer assembles on each DNA strand where it exits the tetramer. Each RuvB hexamer is contacted by two RuvA subunits (via domain III) on 2 adjacent RuvB subunits; this complex drives branch migration. In the full resolvosome a probable DNA-RuvA(4)-RuvB(12)-RuvC(2) complex forms which resolves the HJ.

Its subcellular location is the cytoplasm. The RuvA-RuvB-RuvC complex processes Holliday junction (HJ) DNA during genetic recombination and DNA repair, while the RuvA-RuvB complex plays an important role in the rescue of blocked DNA replication forks via replication fork reversal (RFR). RuvA specifically binds to HJ cruciform DNA, conferring on it an open structure. The RuvB hexamer acts as an ATP-dependent pump, pulling dsDNA into and through the RuvAB complex. HJ branch migration allows RuvC to scan DNA until it finds its consensus sequence, where it cleaves and resolves the cruciform DNA. The polypeptide is Holliday junction branch migration complex subunit RuvA (Clostridium beijerinckii (strain ATCC 51743 / NCIMB 8052) (Clostridium acetobutylicum)).